Reading from the N-terminus, the 550-residue chain is Metal transporter Nramp3 (550 aa).

Residues 1–26 (MSGPMQRSSQPQFISSVERNNQSNGP) are compositionally biased toward polar residues. The interval 1–30 (MSGPMQRSSQPQFISSVERNNQSNGPGTPL) is disordered. 12 helical membrane-spanning segments follow: residues 50–70 (LFSYIGPGFLVSIAYIDPGNF), 83–103 (ELLWIILIASCAALIIQSLAA), 127–147 (FILWILAELAVVACDIPEVIG), 158–178 (IPVWCGVLITGLSTLMLLLLQ), 185–205 (LEFLIAILVSLIATCFLVELG), 233–253 (ISLLGAMVMPHNLFLHSALVL), 276–296 (AFALTIAFLINISIISVSGAV), 333–353 (LFAVALLASGQSSTITGTYAG), 368–390 (WIRNLLTRSLAILPSLIVSIIGG), 397–417 (LIIIASMILSFELPFALVPLL), 435–455 (ISVITWGIGSFIVVINTYFLI), and 473–493 (VFSGIFGFLGMLIYMAAILYL). The tract at residues 523-550 (GEGSLGHLPREDISSMQLPQQRTASDLD) is disordered. A compositionally biased stretch (polar residues) spans 536–550 (SSMQLPQQRTASDLD).

This sequence belongs to the NRAMP (TC 2.A.55) family.

The protein resides in the membrane. Probable metal transporter. This Oryza sativa subsp. japonica (Rice) protein is Metal transporter Nramp3 (NRAMP3).